A 297-amino-acid chain; its full sequence is Protein CANDIDATE G-PROTEIN COUPLED RECEPTOR 8 (297 aa).

The N-linked (GlcNAc...) asparagine glycan is linked to asparagine 20. The next 7 helical transmembrane spans lie at 34–54, 70–90, 107–127, 142–162, 180–200, 215–235, and 242–262; these read GFLH…YLAY, IMIA…AWCC, LTLF…AFLF, FLIS…FLFG, WGLW…VFLM, FYNY…ASAF, and FGFW…LPLL.

The protein belongs to the UPF0359 family.

It localises to the membrane. G-protein coupled receptor. Plays a role in plants and microbes interactions. The protein is Protein CANDIDATE G-PROTEIN COUPLED RECEPTOR 8 of Arabidopsis thaliana (Mouse-ear cress).